The primary structure comprises 264 residues: Undecaprenyl-diphosphatase (264 aa).

The next 8 membrane-spanning stretches (helical) occupy residues 1-21 (MDLIHVVVLALIQGITEFLPI), 39-59 (QGLAFDVAVHVGTLTAVAVYF), 87-107 (WYLIAATIPAALFGLIFDDLI), 111-131 (LRSTDVIATTTLVFGVLLWVA), 144-164 (IALSTAMIIGLAQAVALIPGT), 187-207 (FSFLLSIPVIVLSGGYKGLQL), 208-228 (VLSAAAVDWLAIGLGIALSAV), and 244-264 (IGMLPFVIYRLLLGVLLFIAV).

The protein belongs to the UppP family.

It is found in the cell inner membrane. It carries out the reaction di-trans,octa-cis-undecaprenyl diphosphate + H2O = di-trans,octa-cis-undecaprenyl phosphate + phosphate + H(+). Functionally, catalyzes the dephosphorylation of undecaprenyl diphosphate (UPP). Confers resistance to bacitracin. The chain is Undecaprenyl-diphosphatase from Teredinibacter turnerae (strain ATCC 39867 / T7901).